Reading from the N-terminus, the 78-residue chain is MPRIYRVVGETATGMRFRVEVTAEKPYDAVEKVYSLIGSRHKLSRVQIKIREVAVVSPEEARSDAAKLLMAVDRVVRY.

This sequence belongs to the eukaryotic ribosomal protein eL20 family. Part of the 50S ribosomal subunit. Binds 23S rRNA.

This Pyrobaculum neutrophilum (strain DSM 2338 / JCM 9278 / NBRC 100436 / V24Sta) (Thermoproteus neutrophilus) protein is Large ribosomal subunit protein eL20.